Here is a 72-residue protein sequence, read N- to C-terminus: Translation initiation factor IF-1 (72 aa).

Residues 1–72 (MSKEDVIEVE…SRGRIVYRFK (72 aa)) form the S1-like domain.

This sequence belongs to the IF-1 family. Component of the 30S ribosomal translation pre-initiation complex which assembles on the 30S ribosome in the order IF-2 and IF-3, IF-1 and N-formylmethionyl-tRNA(fMet); mRNA recruitment can occur at any time during PIC assembly.

It is found in the cytoplasm. Functionally, one of the essential components for the initiation of protein synthesis. Stabilizes the binding of IF-2 and IF-3 on the 30S subunit to which N-formylmethionyl-tRNA(fMet) subsequently binds. Helps modulate mRNA selection, yielding the 30S pre-initiation complex (PIC). Upon addition of the 50S ribosomal subunit IF-1, IF-2 and IF-3 are released leaving the mature 70S translation initiation complex. The protein is Translation initiation factor IF-1 of Desulfitobacterium hafniense (strain Y51).